Consider the following 319-residue polypeptide: ADP-L-glycero-D-manno-heptose-6-epimerase (319 aa).

Residues 10 to 11 (FI), 31 to 32 (DD), K38, K53, and 79 to 83 (EGACS) contribute to the NADP(+) site. Catalysis depends on Y144, which acts as the Proton acceptor. K148 contacts NADP(+). A substrate-binding site is contributed by N173. NADP(+)-binding residues include V174 and K182. The active-site Proton acceptor is the K182. Residues S184, H191, 205-208 (FEGC), R218, and Y282 contribute to the substrate site.

It belongs to the NAD(P)-dependent epimerase/dehydratase family. HldD subfamily. In terms of assembly, homopentamer. NADP(+) serves as cofactor.

It catalyses the reaction ADP-D-glycero-beta-D-manno-heptose = ADP-L-glycero-beta-D-manno-heptose. It participates in nucleotide-sugar biosynthesis; ADP-L-glycero-beta-D-manno-heptose biosynthesis; ADP-L-glycero-beta-D-manno-heptose from D-glycero-beta-D-manno-heptose 7-phosphate: step 4/4. Catalyzes the interconversion between ADP-D-glycero-beta-D-manno-heptose and ADP-L-glycero-beta-D-manno-heptose via an epimerization at carbon 6 of the heptose. The polypeptide is ADP-L-glycero-D-manno-heptose-6-epimerase (Aeromonas salmonicida (strain A449)).